Reading from the N-terminus, the 323-residue chain is Transcription factor MYB56 (323 aa).

The span at 1 to 14 (MNPNLLEKDLRGKE) shows a compositional bias: basic and acidic residues. Residues 1-84 (MNPNLLEKDL…EKSLRMRGKS (84 aa)) form a disordered region. Residues 27 to 60 (NFRSLPNSHTAACKTSLNNPSISRNHPHNKSASV) show a composition bias toward polar residues. Positions 66–78 (EHGNERGENEKSL) are enriched in basic and acidic residues. 2 HTH myb-type domains span residues 88 to 139 (TKVC…FNQL) and 140 to 194 (DPRI…ARRT). 2 DNA-binding regions (H-T-H motif) span residues 116 to 138 (WNLI…WFNQ) and 167 to 190 (WALI…HVIM). A disordered region spans residues 192–217 (RRTRESQRQRQQPPPTLSRDAEMTVS).

In terms of assembly, forms homodimer. Interacts with the dephosphorylated active form of BES1 in the nucleus of quiescent center (QC) cells. Interacts with BPM1, BPM2, BPM3, BPM4, BPM5 and BPM6 at the promoter of FLOWERING LOCUS T (FT). In terms of tissue distribution, mostly expressed in flowers (at protein level) and siliques, and, to a lower extent, in roots, stems and leaves. Expressed in embryos (e.g. heart and torpedo stages) and cotyledons, and, at low levels, in roots and inflorescence. Accumulates specifically in root apical meristem quiescent center (QC) and vascular initial cells.

Its subcellular location is the nucleus. It localises to the cytoplasm. The protein localises to the cytosol. Acts as a cell-specific local repressor of quiescent center (QC) self-renewal by cell divisions in the primary root. Counteracts brassinosteroid (BR)-mediated cell division in the QC cells. Regulates maternally seed size, especially before the heart stage, promoting both endothelial cells expansion and cell number in the outer integument layer of the seed coat. Modulates the expression of genes involved in cell wall metabolism such as cell division and expansion. Negative regulator of flowering via the repression of FT transcription. The chain is Transcription factor MYB56 from Arabidopsis thaliana (Mouse-ear cress).